The sequence spans 232 residues: Heptaprenylglyceryl phosphate synthase (232 aa).

Residue K12 coordinates sn-glycerol 1-phosphate. D14 and T40 together coordinate Mg(2+). Sn-glycerol 1-phosphate is bound by residues Y159–G164, G189, and G209–N210.

Belongs to the GGGP/HepGP synthase family. Group I subfamily. Homodimer. Mg(2+) serves as cofactor.

The catalysed reaction is sn-glycerol 1-phosphate + all-trans-heptaprenyl diphosphate = 3-heptaprenyl-sn-glycero-1-phosphate + diphosphate. It participates in membrane lipid metabolism; glycerophospholipid metabolism. Its function is as follows. Prenyltransferase that catalyzes in vivo the transfer of the heptaprenyl moiety of heptaprenyl pyrophosphate (HepPP; 35 carbon atoms) to the C3 hydroxyl of sn-glycerol-1-phosphate (G1P), producing heptaprenylglyceryl phosphate (HepGP). This reaction is an ether-bond-formation step in the biosynthesis of archaea-type G1P-based membrane lipids found in Bacillales. In Shouchella clausii (strain KSM-K16) (Alkalihalobacillus clausii), this protein is Heptaprenylglyceryl phosphate synthase.